Here is an 84-residue protein sequence, read N- to C-terminus: Small ribosomal subunit protein uS17 (84 aa).

This sequence belongs to the universal ribosomal protein uS17 family. As to quaternary structure, part of the 30S ribosomal subunit.

One of the primary rRNA binding proteins, it binds specifically to the 5'-end of 16S ribosomal RNA. The polypeptide is Small ribosomal subunit protein uS17 (Borreliella burgdorferi (strain ATCC 35210 / DSM 4680 / CIP 102532 / B31) (Borrelia burgdorferi)).